The following is a 318-amino-acid chain: Beta-ketoacyl-[acyl-carrier-protein] synthase III (318 aa).

Active-site residues include C112 and H245. The tract at residues 246 to 250 is ACP-binding; that stretch reads QANLR. N275 is a catalytic residue.

Belongs to the thiolase-like superfamily. FabH family. In terms of assembly, homodimer.

It localises to the cytoplasm. It carries out the reaction malonyl-[ACP] + acetyl-CoA + H(+) = 3-oxobutanoyl-[ACP] + CO2 + CoA. It functions in the pathway lipid metabolism; fatty acid biosynthesis. Its function is as follows. Catalyzes the condensation reaction of fatty acid synthesis by the addition to an acyl acceptor of two carbons from malonyl-ACP. Catalyzes the first condensation reaction which initiates fatty acid synthesis and may therefore play a role in governing the total rate of fatty acid production. Possesses both acetoacetyl-ACP synthase and acetyl transacylase activities. Its substrate specificity determines the biosynthesis of branched-chain and/or straight-chain of fatty acids. In Blochmanniella floridana, this protein is Beta-ketoacyl-[acyl-carrier-protein] synthase III.